The primary structure comprises 337 residues: Porphobilinogen deaminase (337 aa).

At Cys-254 the chain carries S-(dipyrrolylmethanemethyl)cysteine.

Belongs to the HMBS family. Dipyrromethane is required as a cofactor.

It carries out the reaction 4 porphobilinogen + H2O = hydroxymethylbilane + 4 NH4(+). Its pathway is porphyrin-containing compound metabolism; protoporphyrin-IX biosynthesis; coproporphyrinogen-III from 5-aminolevulinate: step 2/4. Tetrapolymerization of the monopyrrole PBG into the hydroxymethylbilane pre-uroporphyrinogen in several discrete steps. This chain is Porphobilinogen deaminase (pda-1), found in Neurospora crassa (strain ATCC 24698 / 74-OR23-1A / CBS 708.71 / DSM 1257 / FGSC 987).